The following is a 759-amino-acid chain: Phosphoribosylformylglycinamidine synthase subunit PurL (759 aa).

H46 is an active-site residue. The ATP site is built by Y49 and K88. Residue E90 coordinates Mg(2+). Residues 91–94 (SHNH) and R113 each bind substrate. H92 (proton acceptor) is an active-site residue. Residue D114 coordinates Mg(2+). Q237 provides a ligand contact to substrate. D265 contributes to the Mg(2+) binding site. Substrate is bound at residue 309–311 (ESQ). The ATP site is built by D498 and G535. N536 is a Mg(2+) binding site. A substrate-binding site is contributed by S538.

The protein belongs to the FGAMS family. In terms of assembly, monomer. Part of the FGAM synthase complex composed of 1 PurL, 1 PurQ and 2 PurS subunits.

It is found in the cytoplasm. The catalysed reaction is N(2)-formyl-N(1)-(5-phospho-beta-D-ribosyl)glycinamide + L-glutamine + ATP + H2O = 2-formamido-N(1)-(5-O-phospho-beta-D-ribosyl)acetamidine + L-glutamate + ADP + phosphate + H(+). The protein operates within purine metabolism; IMP biosynthesis via de novo pathway; 5-amino-1-(5-phospho-D-ribosyl)imidazole from N(2)-formyl-N(1)-(5-phospho-D-ribosyl)glycinamide: step 1/2. In terms of biological role, part of the phosphoribosylformylglycinamidine synthase complex involved in the purines biosynthetic pathway. Catalyzes the ATP-dependent conversion of formylglycinamide ribonucleotide (FGAR) and glutamine to yield formylglycinamidine ribonucleotide (FGAM) and glutamate. The FGAM synthase complex is composed of three subunits. PurQ produces an ammonia molecule by converting glutamine to glutamate. PurL transfers the ammonia molecule to FGAR to form FGAM in an ATP-dependent manner. PurS interacts with PurQ and PurL and is thought to assist in the transfer of the ammonia molecule from PurQ to PurL. The polypeptide is Phosphoribosylformylglycinamidine synthase subunit PurL (Anaeromyxobacter dehalogenans (strain 2CP-1 / ATCC BAA-258)).